The chain runs to 303 residues: tRNA pseudouridine synthase B (303 aa).

The Nucleophile role is filled by Asp-53.

The protein belongs to the pseudouridine synthase TruB family. Type 1 subfamily.

It carries out the reaction uridine(55) in tRNA = pseudouridine(55) in tRNA. In terms of biological role, responsible for synthesis of pseudouridine from uracil-55 in the psi GC loop of transfer RNAs. This is tRNA pseudouridine synthase B from Zymomonas mobilis subsp. mobilis (strain ATCC 31821 / ZM4 / CP4).